The chain runs to 251 residues: Ditrans,polycis-undecaprenyl-diphosphate synthase ((2E,6E)-farnesyl-diphosphate specific) (251 aa).

Residue D20 is part of the active site. D20 contributes to the Mg(2+) binding site. Substrate-binding positions include 21–24 (GNGR), W25, R33, H37, and 65–67 (SSE). Catalysis depends on N68, which acts as the Proton acceptor. Residues W69, R71, R188, and 194–196 (RIS) each bind substrate. E207 is a Mg(2+) binding site.

This sequence belongs to the UPP synthase family. In terms of assembly, homodimer. The cofactor is Mg(2+).

The enzyme catalyses 8 isopentenyl diphosphate + (2E,6E)-farnesyl diphosphate = di-trans,octa-cis-undecaprenyl diphosphate + 8 diphosphate. Catalyzes the sequential condensation of isopentenyl diphosphate (IPP) with (2E,6E)-farnesyl diphosphate (E,E-FPP) to yield (2Z,6Z,10Z,14Z,18Z,22Z,26Z,30Z,34E,38E)-undecaprenyl diphosphate (di-trans,octa-cis-UPP). UPP is the precursor of glycosyl carrier lipid in the biosynthesis of bacterial cell wall polysaccharide components such as peptidoglycan and lipopolysaccharide. The sequence is that of Ditrans,polycis-undecaprenyl-diphosphate synthase ((2E,6E)-farnesyl-diphosphate specific) from Vibrio parahaemolyticus serotype O3:K6 (strain RIMD 2210633).